The primary structure comprises 208 residues: Small ribosomal subunit protein uS4 (208 aa).

The region spanning 98 to 159 (RRLDNVIYRL…KSRTVAVITN (62 aa)) is the S4 RNA-binding domain.

Belongs to the universal ribosomal protein uS4 family. Part of the 30S ribosomal subunit. Contacts protein S5. The interaction surface between S4 and S5 is involved in control of translational fidelity.

Its function is as follows. One of the primary rRNA binding proteins, it binds directly to 16S rRNA where it nucleates assembly of the body of the 30S subunit. In terms of biological role, with S5 and S12 plays an important role in translational accuracy. The polypeptide is Small ribosomal subunit protein uS4 (Desulfatibacillum aliphaticivorans).